Reading from the N-terminus, the 316-residue chain is Ribosomal protein L11 methyltransferase (316 aa).

Residues Thr-157, Gly-178, Asp-200, and Asn-243 each contribute to the S-adenosyl-L-methionine site.

It belongs to the methyltransferase superfamily. PrmA family.

The protein resides in the cytoplasm. It carries out the reaction L-lysyl-[protein] + 3 S-adenosyl-L-methionine = N(6),N(6),N(6)-trimethyl-L-lysyl-[protein] + 3 S-adenosyl-L-homocysteine + 3 H(+). In terms of biological role, methylates ribosomal protein L11. This chain is Ribosomal protein L11 methyltransferase, found in Streptococcus pneumoniae serotype 4 (strain ATCC BAA-334 / TIGR4).